Consider the following 94-residue polypeptide: Co-chaperonin GroES (94 aa).

It belongs to the GroES chaperonin family. In terms of assembly, heptamer of 7 subunits arranged in a ring. Interacts with the chaperonin GroEL.

It is found in the cytoplasm. Its function is as follows. Together with the chaperonin GroEL, plays an essential role in assisting protein folding. The GroEL-GroES system forms a nano-cage that allows encapsulation of the non-native substrate proteins and provides a physical environment optimized to promote and accelerate protein folding. GroES binds to the apical surface of the GroEL ring, thereby capping the opening of the GroEL channel. The polypeptide is Co-chaperonin GroES (Enterococcus faecalis (strain ATCC 700802 / V583)).